The sequence spans 1248 residues: Bifunctional autolysin (1248 aa).

The first 29 residues, 1-29 (MAKKFNYKLPSMVALTLVGSAVTAHQVQA), serve as a signal peptide directing secretion. The segment at 103-134 (GDTRANQSATTNNTQPVAKSTSTTAPKTNTNV) is disordered. An N-acetylmuramoyl-L-alanine amidase region spans residues 191–767 (ASAQPRSVAA…AVAQPKTAVK (577 aa)). 7 GW domains span residues 435–509 (TVAA…YNTA), 511–585 (SPVN…DTAK), 604–678 (TVSS…YNNA), 680–754 (SPVN…VPAA), 776–851 (TTQT…VQNL), 853–928 (KEVK…APTA), and 935–1009 (AAKD…KELI). The tract at residues 768 to 1248 (AYTVTKPQTT…GKYFDIPQYK (481 aa)) is endo-beta-N-acetylglucosaminidase.

It in the N-terminal section; belongs to the N-acetylmuramoyl-L-alanine amidase 2 family. This sequence in the C-terminal section; belongs to the glycosyl hydrolase 73 family. In terms of assembly, oligomer; forms a ring structure at the cell surface which is important for efficient partitioning of daughter cells after cell division. Post-translationally, undergoes proteolytic processing to generate the two extracellular lytic enzymes, probably at the septal region on the cell surface.

It is found in the secreted. The catalysed reaction is Hydrolyzes the link between N-acetylmuramoyl residues and L-amino acid residues in certain cell-wall glycopeptides.. The enzyme catalyses an N(4)-(oligosaccharide-(1-&gt;3)-[oligosaccharide-(1-&gt;6)]-beta-D-Man-(1-&gt;4)-beta-D-GlcNAc-(1-&gt;4)-alpha-D-GlcNAc)-L-asparaginyl-[protein] + H2O = an oligosaccharide-(1-&gt;3)-[oligosaccharide-(1-&gt;6)]-beta-D-Man-(1-&gt;4)-D-GlcNAc + N(4)-(N-acetyl-beta-D-glucosaminyl)-L-asparaginyl-[protein]. Functionally, endohydrolysis of the di-N-acetylchitobiosyl unit in high-mannose glycopeptides and glycoproteins containing the -[(Man)5(GlcNAc)2]-Asn structure. One N-acetyl-D-glucosamine residue remains attached to the protein; the rest of the oligosaccharide is released intact. Cleaves the peptidoglycan connecting the daughter cells at the end of the cell division cycle, resulting in the separation of the two newly divided cells. Acts as an autolysin in penicillin-induced lysis. This chain is Bifunctional autolysin (atl), found in Staphylococcus aureus (strain Mu50 / ATCC 700699).